We begin with the raw amino-acid sequence, 882 residues long: Translation initiation factor IF-2 (882 aa).

2 disordered regions span residues 95–176 and 229–289; these read PSVT…ASSL and EHAR…SALQ. Polar residues predominate over residues 116–133; that stretch reads TKNTFSQESLNKTSPQKS. Basic and acidic residues-rich tracts occupy residues 137–172 and 229–246; these read KAIEKAKIESPKKERHSLKEKQKKEAQSEKARREAE and EHARAAEDENDAKVEGDR. Residues 247–262 show a composition bias toward basic residues; that stretch reads RSRHRGTKTTKQKKTN. Positions 263–276 are enriched in basic and acidic residues; that stretch reads KLSESKTDREEARA. Residues 382-551 enclose the tr-type G domain; that stretch reads HRAPVVTIMG…LLQAEVLELK (170 aa). A G1 region spans residues 391 to 398; the sequence is GHVDHGKT. 391 to 398 is a binding site for GTP; the sequence is GHVDHGKT. The segment at 416–420 is G2; the sequence is GITQH. The interval 437 to 440 is G3; it reads DTPG. Residues 437–441 and 491–494 each bind GTP; these read DTPGH and NKID. Positions 491 to 494 are G4; the sequence is NKID. The G5 stretch occupies residues 527–529; sequence SAK.

The protein belongs to the TRAFAC class translation factor GTPase superfamily. Classic translation factor GTPase family. IF-2 subfamily.

It localises to the cytoplasm. Functionally, one of the essential components for the initiation of protein synthesis. Protects formylmethionyl-tRNA from spontaneous hydrolysis and promotes its binding to the 30S ribosomal subunits. Also involved in the hydrolysis of GTP during the formation of the 70S ribosomal complex. The sequence is that of Translation initiation factor IF-2 from Hamiltonella defensa subsp. Acyrthosiphon pisum (strain 5AT).